The chain runs to 237 residues: Ribosomal RNA small subunit methyltransferase G (237 aa).

S-adenosyl-L-methionine is bound by residues Gly-78, Phe-83, 129–130 (AE), and Arg-148. Residues 218–237 (KKETPNKYPRKAGMPNKRPL) are disordered.

It belongs to the methyltransferase superfamily. RNA methyltransferase RsmG family.

Its subcellular location is the cytoplasm. Specifically methylates the N7 position of a guanine in 16S rRNA. This is Ribosomal RNA small subunit methyltransferase G from Streptococcus gordonii (strain Challis / ATCC 35105 / BCRC 15272 / CH1 / DL1 / V288).